The sequence spans 259 residues: MKEHKARKRFGQNFLQDTRIISDIVNAVRPQADDVVIEIGPGLAAITEPLAKKLNRLHVVEIDRDIVCRLKTLPFADKLVIHEGDVLQFDFNGIAGKKKIVGNLPYNISTPLLFKLAEVADDVVDMHFMLQKEVVERMVAAPKSNDYGRLGVMLQYFFDMEMLIDVPPESFDPAPKVDSAVVRMIPVKHRIGKADDFEHFAKLVKLAFHQRRKTIRNNLKELAGDDDLQAVGINPQDRAEHIAPEKYVALSNYLAGKVV.

The S-adenosyl-L-methionine site is built by Asn-13, Leu-15, Gly-40, Glu-61, Asp-85, and Asn-103.

The protein belongs to the class I-like SAM-binding methyltransferase superfamily. rRNA adenine N(6)-methyltransferase family. RsmA subfamily.

The protein resides in the cytoplasm. The enzyme catalyses adenosine(1518)/adenosine(1519) in 16S rRNA + 4 S-adenosyl-L-methionine = N(6)-dimethyladenosine(1518)/N(6)-dimethyladenosine(1519) in 16S rRNA + 4 S-adenosyl-L-homocysteine + 4 H(+). Specifically dimethylates two adjacent adenosines (A1518 and A1519) in the loop of a conserved hairpin near the 3'-end of 16S rRNA in the 30S particle. May play a critical role in biogenesis of 30S subunits. The protein is Ribosomal RNA small subunit methyltransferase A of Neisseria meningitidis serogroup B (strain ATCC BAA-335 / MC58).